The sequence spans 593 residues: Aspartate--tRNA(Asp/Asn) ligase (593 aa).

Glutamate 173 lines the L-aspartate pocket. Positions 197-200 (QLFK) are aspartate. Arginine 219 is a binding site for L-aspartate. ATP contacts are provided by residues 219–221 (RDE) and glutamine 228. Residue histidine 451 participates in L-aspartate binding. Glutamate 485 provides a ligand contact to ATP. Arginine 492 is a binding site for L-aspartate. 537–540 (GIDR) is an ATP binding site.

It belongs to the class-II aminoacyl-tRNA synthetase family. Type 1 subfamily. Homodimer.

The protein localises to the cytoplasm. It catalyses the reaction tRNA(Asx) + L-aspartate + ATP = L-aspartyl-tRNA(Asx) + AMP + diphosphate. Functionally, aspartyl-tRNA synthetase with relaxed tRNA specificity since it is able to aspartylate not only its cognate tRNA(Asp) but also tRNA(Asn). Reaction proceeds in two steps: L-aspartate is first activated by ATP to form Asp-AMP and then transferred to the acceptor end of tRNA(Asp/Asn). The protein is Aspartate--tRNA(Asp/Asn) ligase of Legionella pneumophila (strain Corby).